Here is a 262-residue protein sequence, read N- to C-terminus: Acetylglutamate kinase (262 aa).

Substrate is bound by residues 46-47, Arg68, and Asn160; that span reads GG.

This sequence belongs to the acetylglutamate kinase family. ArgB subfamily.

The protein localises to the cytoplasm. It catalyses the reaction N-acetyl-L-glutamate + ATP = N-acetyl-L-glutamyl 5-phosphate + ADP. It functions in the pathway amino-acid biosynthesis; L-arginine biosynthesis; N(2)-acetyl-L-ornithine from L-glutamate: step 2/4. Its function is as follows. Catalyzes the ATP-dependent phosphorylation of N-acetyl-L-glutamate. The protein is Acetylglutamate kinase of Shewanella amazonensis (strain ATCC BAA-1098 / SB2B).